The sequence spans 337 residues: MNLKYLLLFFCLVQVLHYCYSHGDPSLSNELDRGLIPKCKLVPEQISFVLSTRENQNGVFLTLDNLSKGGILPKSDLSSIPVIFLIHGFISSANNSNYVDMTKALLEKNDCMVISIDWRDGACTHEFKILKFIGYPNAVKNTRAVGKYIADFTKLLMQKYKVSLANIRLIGHSLGAQIAGFAGKEYQKFKLGKYPEIIGLDPAGPLFKSNDCSERICETDAHYVQIIHTSNNLGTERTLGTVDFYVNNGYNQPGCYLSFLGEACSHTRAVKYFTECIRHECCLIGVPQSKNPQPVSKCTRKECVCIGLNAKTYPKTGSFYVPVESKAPYCNNKGKKI.

Residues 1 to 21 form the signal peptide; the sequence is MNLKYLLLFFCLVQVLHYCYS. A propeptide spanning residues 22–33 is cleaved from the precursor; the sequence is HGDPSLSNELDR. Residues Cys39 and Cys123 are joined by a disulfide bond. Residue Ser173 is the Nucleophile of the active site. Asp201 functions as the Charge relay system in the catalytic mechanism. Intrachain disulfides connect Cys212-Cys217 and Cys255-Cys264. Catalysis depends on His266, which acts as the Charge relay system. 3 disulfides stabilise this stretch: Cys281–Cys305, Cys282–Cys330, and Cys298–Cys303.

It belongs to the AB hydrolase superfamily. Lipase family. Expressed by the venom gland.

Its subcellular location is the secreted. The enzyme catalyses a 1,2-diacyl-sn-glycero-3-phosphocholine + H2O = a 2-acyl-sn-glycero-3-phosphocholine + a fatty acid + H(+). Functionally, catalyzes the hydrolysis of phosphatidylcholine with phospholipase A1 activity. May act as an allergen and induce hemolytic activity. In vivo, induces dose-dependent platelet aggregation (nanomolar concentration) and induces thrombosis. In Vespa magnifica (Hornet), this protein is Probable phospholipase A1 magnifin.